Here is a 323-residue protein sequence, read N- to C-terminus: Ankyrin repeat and SOCS box protein 11 (323 aa).

6 ANK repeats span residues 64-93 (ADRS…NVNL), 97-126 (NRVS…HVNG), 130-159 (HGAT…KAQL), 162-191 (HLAS…NIDQ), 195-224 (HLGT…NVNH), and 227-256 (WLDT…NLKC). In terms of domain architecture, SOCS box spans 273 to 323 (SVEQALLLREGPPALSQLCRLCVRKCLGRNCHKTIHKLYLPDPLEKFLLYQ).

The protein belongs to the ankyrin SOCS box (ASB) family. Substrate-recognition component of the ECS(ASB11) complex, composed of ASB11, CUL5, ELOB, ELOC and RNF7/RBX2.

Its subcellular location is the endoplasmic reticulum. It participates in protein modification; protein ubiquitination. In terms of biological role, substrate-recognition component of a cullin-5-RING E3 ubiquitin-protein ligase complex (ECS complex, also named CRL5 complex), which mediates the ubiquitination and subsequent proteasomal degradation of target proteins, such as BIK, DIRAS2 and RPN1. The ECS(ASB11) complex acts as a regulator of the endoplasmic reticulum unfolded protein response by mediating ubiquitination and degradation of BIK. The chain is Ankyrin repeat and SOCS box protein 11 (ASB11) from Bos taurus (Bovine).